Reading from the N-terminus, the 172-residue chain is Translation initiation factor IF-3 (172 aa).

The protein belongs to the IF-3 family. As to quaternary structure, monomer.

The protein localises to the cytoplasm. IF-3 binds to the 30S ribosomal subunit and shifts the equilibrium between 70S ribosomes and their 50S and 30S subunits in favor of the free subunits, thus enhancing the availability of 30S subunits on which protein synthesis initiation begins. This chain is Translation initiation factor IF-3, found in Bartonella tribocorum (strain CIP 105476 / IBS 506).